Reading from the N-terminus, the 273-residue chain is Flagellin FljN (273 aa).

This sequence belongs to the bacterial flagellin family. In C.crescentus, the flagellar filament is composed of multiple flagellins of 29 kDa; 27 kDa and 25 kDa.

Its subcellular location is the secreted. It localises to the bacterial flagellum. Functionally, flagellin is the subunit protein which polymerizes to form the filaments of bacterial flagella. The protein is Flagellin FljN (fljN) of Caulobacter vibrioides (strain ATCC 19089 / CIP 103742 / CB 15) (Caulobacter crescentus).